We begin with the raw amino-acid sequence, 262 residues long: Ribose-5-phosphate isomerase A (262 aa).

Residues 33–36 (TGST), 89–92 (DGAD), and 102–105 (KGGG) each bind substrate. The active-site Proton acceptor is the Glu111. A substrate-binding site is contributed by Lys129.

It belongs to the ribose 5-phosphate isomerase family. In terms of assembly, homodimer.

The enzyme catalyses aldehydo-D-ribose 5-phosphate = D-ribulose 5-phosphate. It functions in the pathway carbohydrate degradation; pentose phosphate pathway; D-ribose 5-phosphate from D-ribulose 5-phosphate (non-oxidative stage): step 1/1. Its function is as follows. Catalyzes the reversible conversion of ribose-5-phosphate to ribulose 5-phosphate. In Ruegeria pomeroyi (strain ATCC 700808 / DSM 15171 / DSS-3) (Silicibacter pomeroyi), this protein is Ribose-5-phosphate isomerase A.